Consider the following 416-residue polypeptide: Tyrosine--tRNA ligase (416 aa).

An L-tyrosine-binding site is contributed by Tyr41. Positions 46-55 match the 'HIGH' region motif; that stretch reads ATASSLHAGH. L-tyrosine contacts are provided by Tyr175 and Gln179. The 'KMSKS' region signature appears at 235–239; sequence KMGKT. Residue Lys238 coordinates ATP. One can recognise an S4 RNA-binding domain in the interval 349–416; it reads LPVAKAFVDA…KKKHVLLKPV (68 aa).

It belongs to the class-I aminoacyl-tRNA synthetase family. TyrS type 1 subfamily. Homodimer.

The protein resides in the cytoplasm. It catalyses the reaction tRNA(Tyr) + L-tyrosine + ATP = L-tyrosyl-tRNA(Tyr) + AMP + diphosphate + H(+). Its function is as follows. Catalyzes the attachment of tyrosine to tRNA(Tyr) in a two-step reaction: tyrosine is first activated by ATP to form Tyr-AMP and then transferred to the acceptor end of tRNA(Tyr). The chain is Tyrosine--tRNA ligase from Xanthobacter autotrophicus (strain ATCC BAA-1158 / Py2).